The sequence spans 184 residues: ATP synthase subunit b, chloroplastic (184 aa).

The chain crosses the membrane as a helical span at residues 26–48; sequence ILATNLINLSVVLGVLIFFGKGV.

Belongs to the ATPase B chain family. As to quaternary structure, F-type ATPases have 2 components, F(1) - the catalytic core - and F(0) - the membrane proton channel. F(1) has five subunits: alpha(3), beta(3), gamma(1), delta(1), epsilon(1). F(0) has four main subunits: a(1), b(1), b'(1) and c(10-14). The alpha and beta chains form an alternating ring which encloses part of the gamma chain. F(1) is attached to F(0) by a central stalk formed by the gamma and epsilon chains, while a peripheral stalk is formed by the delta, b and b' chains.

The protein resides in the plastid. The protein localises to the chloroplast thylakoid membrane. In terms of biological role, f(1)F(0) ATP synthase produces ATP from ADP in the presence of a proton or sodium gradient. F-type ATPases consist of two structural domains, F(1) containing the extramembraneous catalytic core and F(0) containing the membrane proton channel, linked together by a central stalk and a peripheral stalk. During catalysis, ATP synthesis in the catalytic domain of F(1) is coupled via a rotary mechanism of the central stalk subunits to proton translocation. Its function is as follows. Component of the F(0) channel, it forms part of the peripheral stalk, linking F(1) to F(0). In Calycanthus floridus var. glaucus (Eastern sweetshrub), this protein is ATP synthase subunit b, chloroplastic.